A 460-amino-acid chain; its full sequence is Argininosuccinate lyase (460 aa).

Belongs to the lyase 1 family. Argininosuccinate lyase subfamily.

The protein resides in the cytoplasm. It carries out the reaction 2-(N(omega)-L-arginino)succinate = fumarate + L-arginine. It participates in amino-acid biosynthesis; L-arginine biosynthesis; L-arginine from L-ornithine and carbamoyl phosphate: step 3/3. The chain is Argininosuccinate lyase from Rhodopirellula baltica (strain DSM 10527 / NCIMB 13988 / SH1).